A 64-amino-acid chain; its full sequence is Large ribosomal subunit protein uL29 (64 aa).

Belongs to the universal ribosomal protein uL29 family.

This is Large ribosomal subunit protein uL29 from Pseudomonas entomophila (strain L48).